The following is a 245-amino-acid chain: Acyl-protein thioesterase 1 (245 aa).

Residues Ser-126, Asp-182, and His-214 each act as charge relay system in the active site.

This sequence belongs to the AB hydrolase superfamily. AB hydrolase 2 family.

It localises to the cytoplasm. The protein resides in the nucleus. The enzyme catalyses S-hexadecanoyl-L-cysteinyl-[protein] + H2O = L-cysteinyl-[protein] + hexadecanoate + H(+). In terms of biological role, hydrolyzes fatty acids from S-acylated cysteine residues in proteins with a strong preference for palmitoylated G-alpha proteins over other acyl substrates. Mediates the deacylation of G-alpha proteins such as GPA1 in vivo, but has weak or no activity toward palmitoylated Ras proteins. Has weak lysophospholipase activity in vitro; however such activity may not exist in vivo. This is Acyl-protein thioesterase 1 from Neurospora crassa (strain ATCC 24698 / 74-OR23-1A / CBS 708.71 / DSM 1257 / FGSC 987).